The sequence spans 445 residues: Methionine aminopeptidase 2 (445 aa).

Residues 1–76 (MAAQVASGVG…KKKCTSKVQT (76 aa)) are disordered. The segment covering 57–71 (AKKKKKKTKKKKKCT) has biased composition (basic residues). Residue histidine 195 coordinates substrate. Residues aspartate 215, aspartate 226, and histidine 295 each coordinate a divalent metal cation. Position 303 (histidine 303) interacts with substrate. A divalent metal cation contacts are provided by glutamate 331 and glutamate 426.

Belongs to the peptidase M24A family. Methionine aminopeptidase eukaryotic type 2 subfamily. Co(2+) serves as cofactor. Zn(2+) is required as a cofactor. Requires Mn(2+) as cofactor. It depends on Fe(2+) as a cofactor.

It is found in the cytoplasm. It carries out the reaction Release of N-terminal amino acids, preferentially methionine, from peptides and arylamides.. In terms of biological role, cotranslationally removes the N-terminal methionine from nascent proteins. The N-terminal methionine is often cleaved when the second residue in the primary sequence is small and uncharged (Met-Ala-, Cys, Gly, Pro, Ser, Thr, or Val). In Paracoccidioides lutzii (strain ATCC MYA-826 / Pb01) (Paracoccidioides brasiliensis), this protein is Methionine aminopeptidase 2.